Here is a 406-residue protein sequence, read N- to C-terminus: NADH-quinone oxidoreductase subunit D (406 aa).

The protein belongs to the complex I 49 kDa subunit family. NDH-1 is composed of 14 different subunits. Subunits NuoB, C, D, E, F, and G constitute the peripheral sector of the complex.

The protein localises to the cell inner membrane. It carries out the reaction a quinone + NADH + 5 H(+)(in) = a quinol + NAD(+) + 4 H(+)(out). NDH-1 shuttles electrons from NADH, via FMN and iron-sulfur (Fe-S) centers, to quinones in the respiratory chain. The immediate electron acceptor for the enzyme in this species is believed to be ubiquinone. Couples the redox reaction to proton translocation (for every two electrons transferred, four hydrogen ions are translocated across the cytoplasmic membrane), and thus conserves the redox energy in a proton gradient. The chain is NADH-quinone oxidoreductase subunit D from Acidiphilium cryptum (strain JF-5).